Here is a 431-residue protein sequence, read N- to C-terminus: Histidinol dehydrogenase (431 aa).

NAD(+) contacts are provided by Tyr-127, Gln-189, and Asn-212. The substrate site is built by Ser-237, Gln-259, and His-262. Residues Gln-259 and His-262 each coordinate Zn(2+). Active-site proton acceptor residues include Glu-326 and His-327. His-327, Asp-360, Glu-414, and His-419 together coordinate substrate. Asp-360 contacts Zn(2+). His-419 lines the Zn(2+) pocket.

Belongs to the histidinol dehydrogenase family. Zn(2+) is required as a cofactor.

The catalysed reaction is L-histidinol + 2 NAD(+) + H2O = L-histidine + 2 NADH + 3 H(+). Its pathway is amino-acid biosynthesis; L-histidine biosynthesis; L-histidine from 5-phospho-alpha-D-ribose 1-diphosphate: step 9/9. In terms of biological role, catalyzes the sequential NAD-dependent oxidations of L-histidinol to L-histidinaldehyde and then to L-histidine. In Xanthomonas campestris pv. campestris (strain ATCC 33913 / DSM 3586 / NCPPB 528 / LMG 568 / P 25), this protein is Histidinol dehydrogenase.